The sequence spans 1165 residues: Valine--tRNA ligase (1165 aa).

Residues 43 to 53 (PNVTGSLHMGH) carry the 'HIGH' region motif. The 'KMSKS' region signature appears at 800–804 (KMSKT). K803 serves as a coordination point for ATP. 2 coiled-coil regions span residues 1001–1032 (KNED…SDLQ) and 1097–1165 (HVDL…VLRS).

This sequence belongs to the class-I aminoacyl-tRNA synthetase family. ValS type 1 subfamily. As to quaternary structure, monomer.

Its subcellular location is the cytoplasm. The enzyme catalyses tRNA(Val) + L-valine + ATP = L-valyl-tRNA(Val) + AMP + diphosphate. Functionally, catalyzes the attachment of valine to tRNA(Val). As ValRS can inadvertently accommodate and process structurally similar amino acids such as threonine, to avoid such errors, it has a 'posttransfer' editing activity that hydrolyzes mischarged Thr-tRNA(Val) in a tRNA-dependent manner. The polypeptide is Valine--tRNA ligase (Aquifex aeolicus (strain VF5)).